A 435-amino-acid chain; its full sequence is Methylenetetrahydrofolate--tRNA-(uracil-5-)-methyltransferase TrmFO (435 aa).

FAD is bound at residue 7–12; that stretch reads GAGLAG.

Belongs to the MnmG family. TrmFO subfamily. FAD is required as a cofactor.

The protein resides in the cytoplasm. The enzyme catalyses uridine(54) in tRNA + (6R)-5,10-methylene-5,6,7,8-tetrahydrofolate + NADH + H(+) = 5-methyluridine(54) in tRNA + (6S)-5,6,7,8-tetrahydrofolate + NAD(+). The catalysed reaction is uridine(54) in tRNA + (6R)-5,10-methylene-5,6,7,8-tetrahydrofolate + NADPH + H(+) = 5-methyluridine(54) in tRNA + (6S)-5,6,7,8-tetrahydrofolate + NADP(+). Its function is as follows. Catalyzes the folate-dependent formation of 5-methyl-uridine at position 54 (M-5-U54) in all tRNAs. The chain is Methylenetetrahydrofolate--tRNA-(uracil-5-)-methyltransferase TrmFO from Thermotoga neapolitana (strain ATCC 49049 / DSM 4359 / NBRC 107923 / NS-E).